A 341-amino-acid polypeptide reads, in one-letter code: MEEHDYDSNSNPPLMSTYKHLFVEQHRLDMDMGAIDVDECELPVIDLAGLMEAEQVCRADMVRAASEWGFFQVTNHGVPQALLRELHDAQVAVFRRPFQEKVTERLLGFSPESYRWGTPTAKCLEQLSWSEAYHIPMTTPRPSTSIRARAVIEEVSRAMYELAQKLAEILMRGLPGAGEGETMVTTREETCFLRLNRYPPCAMAMGGFGLCPHTDSDLLTIVHQQQDTVGGLQLLKGGRWVAVKPSPSTLIVNVGDLLQAWSNDVYKSVEHRVMANATLERFSMAFFLCPSYHTLIIPSSSHVHDDDAHYRSFTFGEYRKQIMEDVRSTGRKIGLHRFRTR.

One can recognise a Fe2OG dioxygenase domain in the interval 187 to 290 (REETCFLRLN…RFSMAFFLCP (104 aa)). Tyrosine 198 contributes to the 2-oxoglutarate binding site. Fe cation contacts are provided by histidine 213, aspartate 215, and histidine 271. 2-oxoglutarate contacts are provided by arginine 281 and serine 283.

The protein belongs to the iron/ascorbate-dependent oxidoreductase family. GA2OX subfamily. Requires L-ascorbate as cofactor. The cofactor is Fe(2+). In terms of tissue distribution, expressed in roots, leaves, culms, leaf sheaths and young panicles.

It is found in the cytoplasm. Its subcellular location is the nucleus. It catalyses the reaction gibberellin A1 + 2-oxoglutarate + O2 = gibberellin A8 + succinate + CO2. Its pathway is plant hormone biosynthesis; gibberellin biosynthesis. Catalyzes the 2-beta-hydroxylation of several biologically active gibberellins (GAs), leading to the homeostatic regulation of their endogenous level. Catabolism of GAs plays a central role in plant development. In vitro, converts GA12 and GA53 to the corresponding 2-beta-hydroxylated products GA110 and GA97, respectively. This chain is Gibberellin 2-beta-dioxygenase 5, found in Oryza sativa subsp. japonica (Rice).